Consider the following 147-residue polypeptide: D-aminoacyl-tRNA deacylase (147 aa).

A Gly-cisPro motif, important for rejection of L-amino acids motif is present at residues 136-137 (GP).

Belongs to the DTD family. Homodimer.

The protein resides in the cytoplasm. The catalysed reaction is glycyl-tRNA(Ala) + H2O = tRNA(Ala) + glycine + H(+). The enzyme catalyses a D-aminoacyl-tRNA + H2O = a tRNA + a D-alpha-amino acid + H(+). Functionally, an aminoacyl-tRNA editing enzyme that deacylates mischarged D-aminoacyl-tRNAs. Also deacylates mischarged glycyl-tRNA(Ala), protecting cells against glycine mischarging by AlaRS. Acts via tRNA-based rather than protein-based catalysis; rejects L-amino acids rather than detecting D-amino acids in the active site. By recycling D-aminoacyl-tRNA to D-amino acids and free tRNA molecules, this enzyme counteracts the toxicity associated with the formation of D-aminoacyl-tRNA entities in vivo and helps enforce protein L-homochirality. The polypeptide is D-aminoacyl-tRNA deacylase (Streptococcus sanguinis (strain SK36)).